The primary structure comprises 71 residues: Translation initiation factor IF-1 (71 aa).

The S1-like domain occupies 1-71 (MKEKNIEMQG…SKGRIIFRSR (71 aa)).

It belongs to the IF-1 family. As to quaternary structure, component of the 30S ribosomal translation pre-initiation complex which assembles on the 30S ribosome in the order IF-2 and IF-3, IF-1 and N-formylmethionyl-tRNA(fMet); mRNA recruitment can occur at any time during PIC assembly.

The protein localises to the cytoplasm. In terms of biological role, one of the essential components for the initiation of protein synthesis. Stabilizes the binding of IF-2 and IF-3 on the 30S subunit to which N-formylmethionyl-tRNA(fMet) subsequently binds. Helps modulate mRNA selection, yielding the 30S pre-initiation complex (PIC). Upon addition of the 50S ribosomal subunit IF-1, IF-2 and IF-3 are released leaving the mature 70S translation initiation complex. This is Translation initiation factor IF-1 from Buchnera aphidicola subsp. Cinara cedri (strain Cc).